A 127-amino-acid chain; its full sequence is PRA1 family protein C (127 aa).

3 helical membrane passes run 15–35 (IFIS…LIVA), 53–73 (VIDD…IFLL), and 76–96 (VSRG…VHGM).

The protein belongs to the PRA1 family.

Its subcellular location is the endoplasmic reticulum membrane. May be involved in both secretory and endocytic intracellular trafficking in the endosomal/prevacuolar compartments. In Arabidopsis thaliana (Mouse-ear cress), this protein is PRA1 family protein C (PRA1C).